We begin with the raw amino-acid sequence, 366 residues long: Ribosomal RNA large subunit methyltransferase M (366 aa).

S-adenosyl-L-methionine contacts are provided by residues S188, 221–224, D240, D260, and D277; that span reads CPGG. K306 (proton acceptor) is an active-site residue.

This sequence belongs to the class I-like SAM-binding methyltransferase superfamily. RNA methyltransferase RlmE family. RlmM subfamily. In terms of assembly, monomer.

The protein resides in the cytoplasm. The catalysed reaction is cytidine(2498) in 23S rRNA + S-adenosyl-L-methionine = 2'-O-methylcytidine(2498) in 23S rRNA + S-adenosyl-L-homocysteine + H(+). Functionally, catalyzes the 2'-O-methylation at nucleotide C2498 in 23S rRNA. The protein is Ribosomal RNA large subunit methyltransferase M of Escherichia coli O127:H6 (strain E2348/69 / EPEC).